A 440-amino-acid chain; its full sequence is Exodeoxyribonuclease 7 large subunit (440 aa).

Belongs to the XseA family. As to quaternary structure, heterooligomer composed of large and small subunits.

The protein resides in the cytoplasm. It carries out the reaction Exonucleolytic cleavage in either 5'- to 3'- or 3'- to 5'-direction to yield nucleoside 5'-phosphates.. Its function is as follows. Bidirectionally degrades single-stranded DNA into large acid-insoluble oligonucleotides, which are then degraded further into small acid-soluble oligonucleotides. This chain is Exodeoxyribonuclease 7 large subunit, found in Ralstonia nicotianae (strain ATCC BAA-1114 / GMI1000) (Ralstonia solanacearum).